Here is a 217-residue protein sequence, read N- to C-terminus: Methylthioribulose-1-phosphate dehydratase (217 aa).

Zn(2+) contacts are provided by His106 and His108.

Belongs to the aldolase class II family. MtnB subfamily. The cofactor is Zn(2+).

It carries out the reaction 5-(methylsulfanyl)-D-ribulose 1-phosphate = 5-methylsulfanyl-2,3-dioxopentyl phosphate + H2O. It participates in amino-acid biosynthesis; L-methionine biosynthesis via salvage pathway; L-methionine from S-methyl-5-thio-alpha-D-ribose 1-phosphate: step 2/6. In terms of biological role, catalyzes the dehydration of methylthioribulose-1-phosphate (MTRu-1-P) into 2,3-diketo-5-methylthiopentyl-1-phosphate (DK-MTP-1-P). The sequence is that of Methylthioribulose-1-phosphate dehydratase from Xanthomonas campestris pv. campestris (strain B100).